A 91-amino-acid chain; its full sequence is Small ribosomal subunit protein bS18 (91 aa).

The protein belongs to the bacterial ribosomal protein bS18 family. In terms of assembly, part of the 30S ribosomal subunit. Forms a tight heterodimer with protein bS6.

Binds as a heterodimer with protein bS6 to the central domain of the 16S rRNA, where it helps stabilize the platform of the 30S subunit. This chain is Small ribosomal subunit protein bS18, found in Paraburkholderia xenovorans (strain LB400).